A 225-amino-acid chain; its full sequence is Nuclear protein UL4 homolog (225 aa).

Belongs to the alphaherpesvirinae HHV-1 UL4 family.

The protein localises to the host nucleus. The polypeptide is Nuclear protein UL4 homolog (Equus caballus (Horse)).